A 629-amino-acid chain; its full sequence is Phosphomethylpyrimidine synthase (629 aa).

Residues 1–21 form a disordered region; that stretch reads MSIKAKNAAHLRESAQVDSGS. Substrate is bound by residues asparagine 233, methionine 262, tyrosine 291, histidine 327, 347–349, 388–391, and glutamate 427; these read SRG and DGLR. Histidine 431 is a binding site for Zn(2+). Tyrosine 454 contributes to the substrate binding site. Position 495 (histidine 495) interacts with Zn(2+). The [4Fe-4S] cluster site is built by cysteine 575, cysteine 578, and cysteine 583.

Belongs to the ThiC family. Homodimer. [4Fe-4S] cluster serves as cofactor.

It catalyses the reaction 5-amino-1-(5-phospho-beta-D-ribosyl)imidazole + S-adenosyl-L-methionine = 4-amino-2-methyl-5-(phosphooxymethyl)pyrimidine + CO + 5'-deoxyadenosine + formate + L-methionine + 3 H(+). Its pathway is cofactor biosynthesis; thiamine diphosphate biosynthesis. Functionally, catalyzes the synthesis of the hydroxymethylpyrimidine phosphate (HMP-P) moiety of thiamine from aminoimidazole ribotide (AIR) in a radical S-adenosyl-L-methionine (SAM)-dependent reaction. The polypeptide is Phosphomethylpyrimidine synthase (Pseudomonas syringae pv. syringae (strain B728a)).